We begin with the raw amino-acid sequence, 494 residues long: Alpha-amylase-related protein (494 aa).

An N-terminal signal peptide occupies residues 1-20; the sequence is MFKFTFALALCVLAAGLVLA. Glutamine 21 bears the Pyrrolidone carboxylic acid mark. An intrachain disulfide couples cysteine 48 to cysteine 104. Residues asparagine 118, glutamine 169, and aspartate 178 each contribute to the Ca(2+) site. Residues cysteine 157 and cysteine 171 are joined by a disulfide bond. Arginine 206 is a chloride binding site. Aspartate 208 serves as the catalytic Nucleophile. Histidine 212 is a binding site for Ca(2+). Glutamate 245 functions as the Proton donor in the catalytic mechanism. Residues asparagine 308 and arginine 343 each contribute to the chloride site. Cystine bridges form between cysteine 376/cysteine 382, cysteine 418/cysteine 441, and cysteine 448/cysteine 460.

The protein belongs to the glycosyl hydrolase 13 family. As to quaternary structure, monomer. Ca(2+) is required as a cofactor. Requires chloride as cofactor.

The protein localises to the secreted. It catalyses the reaction Endohydrolysis of (1-&gt;4)-alpha-D-glucosidic linkages in polysaccharides containing three or more (1-&gt;4)-alpha-linked D-glucose units.. This Drosophila pseudoobscura pseudoobscura (Fruit fly) protein is Alpha-amylase-related protein (Amyrel).